A 102-amino-acid polypeptide reads, in one-letter code: RNA-binding protein Hfq (102 aa).

A Sm domain is found at 9–68; that stretch reads DPFLNALRRERVPVSIYLVNGIKLQGQIESFDQFVILLKNTVSQMVYKHAISTVVPSRPV. Residues 63–102 are disordered; that stretch reads VPSRPVSHHSNNAGGGSNNYHHSNNAQPSSAASQDSEDAE. Residues 70–96 are compositionally biased toward low complexity; it reads HHSNNAGGGSNNYHHSNNAQPSSAASQ.

Belongs to the Hfq family. As to quaternary structure, homohexamer.

Functionally, RNA chaperone that binds small regulatory RNA (sRNAs) and mRNAs to facilitate mRNA translational regulation in response to envelope stress, environmental stress and changes in metabolite concentrations. Also binds with high specificity to tRNAs. In Cronobacter sakazakii (strain ATCC BAA-894) (Enterobacter sakazakii), this protein is RNA-binding protein Hfq.